The chain runs to 540 residues: Sensory neuron membrane protein 1 (540 aa).

Residues 1-105 (MRTDDPVIGN…WIFRPDLSKP (105 aa)) are Cytoplasmic-facing. A helical membrane pass occupies residues 106-126 (LTGDEMITIPHPLILGALLMV). Residues 127–436 (QRDREAMMPL…YTLFLGLRFN (310 aa)) are Extracellular-facing. N-linked (GlcNAc...) asparagine glycans are attached at residues Asn-193 and Asn-206. Cystine bridges form between Cys-245–Cys-310, Cys-274–Cys-330, and Cys-312–Cys-319. The N-linked (GlcNAc...) asparagine glycan is linked to Asn-418. The helical transmembrane segment at 437 to 457 (TAVKWLTIIIGTIGTIVGGFM) threads the bilayer. Over 458–540 (HYKRTTKMVN…VTVTEMQERY (83 aa)) the chain is Cytoplasmic.

Belongs to the CD36 family.

It localises to the cell membrane. In terms of biological role, plays an olfactory role that is not restricted to pheromone sensitivity. This Aedes aegypti (Yellowfever mosquito) protein is Sensory neuron membrane protein 1.